Here is a 519-residue protein sequence, read N- to C-terminus: Transmembrane protein 180 (519 aa).

Residues 1 to 11 (MGLDWPQAWLL) lie on the Extracellular side of the membrane. The chain crosses the membrane as a helical span at residues 12–43 (GLPIAVVYGSLALFTSILHNVFLLYYVDTFVS). The Cytoplasmic segment spans residues 44–55 (VYKINKVSFWVG). A helical membrane pass occupies residues 56–74 (ETVFLLWNSFNDPLFGWLS). The Extracellular portion of the chain corresponds to 75–100 (DRQLLSSQPRSGAGLSSRDVVLTRVR). Residues 101 to 118 (ALGWHGPLLALSFLAFWV) form a helical membrane-spanning segment. Topologically, residues 119–126 (PWAPAGLQ) are cytoplasmic. Residues 127–151 (FLLCLCLYDGFLTLVDLHHHALLAD) form a helical membrane-spanning segment. Residues 152–155 (LALS) lie on the Extracellular side of the membrane. A helical transmembrane segment spans residues 156 to 179 (SHDRTHLNFYCSLFSAAGSLSVFA). At 180–191 (SYAFWNKEDFSS) the chain is on the cytoplasmic side. The chain crosses the membrane as a helical span at residues 192–223 (FRAFCVVLAAGSGLGFLGTTQLLKRQIEATRR). Residues 224–264 (DRGCPGLDLDGGVCEEEPPVGGEEAGNITLGQYLRQLARHQ) are Extracellular-facing. A glycan (N-linked (GlcNAc...) asparagine) is linked at N250. Residues 265-292 (NFLWFVGMDLVQVFHCHFNSNFFPLFLE) form a helical membrane-spanning segment. The Cytoplasmic segment spans residues 293–305 (HLLSDHISLSTGS). Residues 306–325 (FLLGISYVAPHLNNLYFLPL) traverse the membrane as a helical segment. The Extracellular segment spans residues 326–330 (CRRWG). A helical transmembrane segment spans residues 331–350 (VYAVVRGLFLLKLSLSLLML). The Cytoplasmic segment spans residues 351–358 (LAGPDHPG). A helical transmembrane segment spans residues 359–393 (LLCFFIASNRVFTEGTCKLLTLVVTDLVDEDLVLN). Residues 394-402 (HRKQAASAL) lie on the Extracellular side of the membrane. Residues 403–429 (LFGMVALVTKPGQTFAPLLGTWLLCFY) form a helical membrane-spanning segment. Residues 430-468 (TGHDLFQQSPMTPVGSVRPWPELPAPAPAPAQAPTLRQG) lie on the Cytoplasmic side of the membrane. The helical transmembrane segment at 469 to 487 (CFYLLVFVPITCALLQLFT) threads the bilayer. Residues 488-519 (WSQFTLHGRRLRTVKAQRQNLAQIHTLNIKMV) lie on the Extracellular side of the membrane.

The protein localises to the cell membrane. The chain is Transmembrane protein 180 from Mus musculus (Mouse).